The sequence spans 324 residues: Phospho-N-acetylmuramoyl-pentapeptide-transferase (324 aa).

The next 10 membrane-spanning stretches (helical) occupy residues 5–25 (VILF…PIFI), 55–75 (GGLM…DIFF), 81–101 (TYML…DDFI), 122–142 (LIAL…VVSI), 147–167 (VSLD…VGGS), 176–196 (LDGL…VLAW), 203–223 (VAIF…FNAH), 227–247 (VFMG…IAIL), 250–270 (LEIL…SVII), and 302–322 (VVVT…YIEV).

Belongs to the glycosyltransferase 4 family. MraY subfamily. It depends on Mg(2+) as a cofactor.

It localises to the cell membrane. It carries out the reaction UDP-N-acetyl-alpha-D-muramoyl-L-alanyl-gamma-D-glutamyl-meso-2,6-diaminopimeloyl-D-alanyl-D-alanine + di-trans,octa-cis-undecaprenyl phosphate = di-trans,octa-cis-undecaprenyl diphospho-N-acetyl-alpha-D-muramoyl-L-alanyl-D-glutamyl-meso-2,6-diaminopimeloyl-D-alanyl-D-alanine + UMP. It participates in cell wall biogenesis; peptidoglycan biosynthesis. Functionally, catalyzes the initial step of the lipid cycle reactions in the biosynthesis of the cell wall peptidoglycan: transfers peptidoglycan precursor phospho-MurNAc-pentapeptide from UDP-MurNAc-pentapeptide onto the lipid carrier undecaprenyl phosphate, yielding undecaprenyl-pyrophosphoryl-MurNAc-pentapeptide, known as lipid I. In Anoxybacillus flavithermus (strain DSM 21510 / WK1), this protein is Phospho-N-acetylmuramoyl-pentapeptide-transferase.